The chain runs to 126 residues: Fluoride-specific ion channel FluC (126 aa).

The next 4 helical transmembrane spans lie at 3–23 (FAIL…RFLV), 37–57 (IGTL…IACV), 70–90 (VIGL…MDNV), and 104–124 (NVLL…HWLM). The Na(+) site is built by Gly-77 and Thr-80.

Belongs to the fluoride channel Fluc/FEX (TC 1.A.43) family.

It localises to the cell inner membrane. It catalyses the reaction fluoride(in) = fluoride(out). With respect to regulation, na(+) is not transported, but it plays an essential structural role and its presence is essential for fluoride channel function. Fluoride-specific ion channel. Important for reducing fluoride concentration in the cell, thus reducing its toxicity. In Vibrio cholerae serotype O1 (strain ATCC 39541 / Classical Ogawa 395 / O395), this protein is Fluoride-specific ion channel FluC.